The chain runs to 256 residues: Protein RGF1 INDUCIBLE TRANSCRIPTION FACTOR 1 (256 aa).

A B box-type zinc finger spans residues 21–59 (CPYHETAKKNERNVCCLDCCTSLCPHCVPSHRFHRLLQV).

In terms of tissue distribution, expressed predominantly in root meristematic zones.

Its subcellular location is the nucleus. Functionally, probable transcription factor that plays a central role in mediating RGF1 hormone peptide signaling leading to the production of reactive oxygen species (ROS) in roots to modulate meristem size and root growth, probably via oxidative post-translational modification of the transcription factor PLETHORA (e.g. PLT1 and PLT2). This is Protein RGF1 INDUCIBLE TRANSCRIPTION FACTOR 1 from Arabidopsis thaliana (Mouse-ear cress).